The sequence spans 577 residues: Zona pellucida sperm-binding protein 3 receptor (577 aa).

The signal sequence occupies residues Met-1 to Gly-32. Sushi domains lie at Asp-33–Arg-92, Lys-93–Ile-154, Ala-155–Lys-219, Ile-220–Pro-279, Asn-280–Arg-346, and Val-347–Ala-412. Intrachain disulfides connect Cys-34–Cys-78, Cys-64–Cys-90, Cys-95–Cys-136, Cys-122–Cys-152, Cys-157–Cys-200, Cys-186–Cys-217, Cys-222–Cys-264, Cys-250–Cys-277, Cys-282–Cys-332, Cys-316–Cys-344, Cys-349–Cys-397, and Cys-382–Cys-410. 2 N-linked (GlcNAc...) asparagine glycosylation sites follow: Asn-72 and Asn-81. N-linked (GlcNAc...) asparagine glycosylation is found at Asn-144, Asn-195, and Asn-204. N-linked (GlcNAc...) asparagine glycosylation is present at Asn-335. N-linked (GlcNAc...) asparagine glycans are attached at residues Asn-426, Asn-431, Asn-434, Asn-443, Asn-462, Asn-475, and Asn-497. The region spanning Ala-451–Met-509 is the Sushi 7 domain. Disulfide bonds link Cys-453-Cys-494 and Cys-480-Cys-507.

In terms of assembly, homomultimer; disulfide-linked. Glycosylated. Testis specific.

It is found in the cytoplasmic vesicle. The protein localises to the secretory vesicle. The protein resides in the acrosome lumen. Its function is as follows. Binds to ZP3 glycoprotein in egg zona pellucida. Probably involved in interactions between sperm acrosome and egg zona pellucida during and immediately following the acrosome reaction. This Rattus norvegicus (Rat) protein is Zona pellucida sperm-binding protein 3 receptor (Zp3r).